The chain runs to 1353 residues: DNA-directed RNA polymerase subunit beta' (1353 aa).

Residues methionine 1–lysine 117 are unknown. Residues leucine 118 to asparagine 1353 form a DNA-directed RNA polymerase subunit beta' region. Positions 189, 191, 203, and 206 each coordinate Zn(2+). Residues aspartate 578, aspartate 580, and aspartate 582 each coordinate Mg(2+).

This sequence belongs to the RNA polymerase beta' chain family. In terms of assembly, the RNAP catalytic core consists of 2 alpha, 1 beta, 1 beta' and 1 omega subunit. When a sigma factor is associated with the core the holoenzyme is formed, which can initiate transcription. The cofactor is Mg(2+). Zn(2+) is required as a cofactor.

The enzyme catalyses RNA(n) + a ribonucleoside 5'-triphosphate = RNA(n+1) + diphosphate. DNA-dependent RNA polymerase catalyzes the transcription of DNA into RNA using the four ribonucleoside triphosphates as substrates. This is DNA-directed RNA polymerase subunit beta' from Onion yellows phytoplasma (strain OY-M).